A 215-amino-acid polypeptide reads, in one-letter code: Peptide methionine sulfoxide reductase MsrA (215 aa).

The active site involves cysteine 58.

This sequence belongs to the MsrA Met sulfoxide reductase family.

It catalyses the reaction L-methionyl-[protein] + [thioredoxin]-disulfide + H2O = L-methionyl-(S)-S-oxide-[protein] + [thioredoxin]-dithiol. It carries out the reaction [thioredoxin]-disulfide + L-methionine + H2O = L-methionine (S)-S-oxide + [thioredoxin]-dithiol. Its function is as follows. Has an important function as a repair enzyme for proteins that have been inactivated by oxidation. Catalyzes the reversible oxidation-reduction of methionine sulfoxide in proteins to methionine. The chain is Peptide methionine sulfoxide reductase MsrA from Pseudomonas savastanoi pv. phaseolicola (strain 1448A / Race 6) (Pseudomonas syringae pv. phaseolicola (strain 1448A / Race 6)).